The chain runs to 481 residues: Bestrophin homolog 17 (481 aa).

At 1–27 the chain is on the cytoplasmic side; the sequence is MTVSYQLDVSSGNPLLFLRLLGRWRGS. A helical membrane pass occupies residues 28–48; that stretch reads IWKSVVGDLFVWLLFYYAIYF. Residues 49–95 lie on the Extracellular side of the membrane; sequence AYRYAFSKQLQTVFEEISIHTDDRMKYLPLTFMLGFFVTTVFERWRS. Residues 96–116 traverse the membrane as a helical segment; it reads ALNVMPFIESVALSVAVLLPG. The Cytoplasmic segment spans residues 117–230; sequence KGREDRLTRR…AMETLIKFDA (114 aa). The helical transmembrane segment at 231 to 251 threads the bilayer; that stretch reads IPIPIAYPQVVFLAVRVYFAI. Residues 252–274 lie on the Extracellular side of the membrane; the sequence is CLVSRQFLISDMKSKTQMDWPVP. The chain crosses the membrane as a helical span at residues 275–295; the sequence is IMTVLEFIFVIGWMKVAEVLL. Residues 296–481 are Cytoplasmic-facing; the sequence is NPLGEDDDDF…SSEESVDKKG (186 aa). A disordered region spans residues 427 to 481; that stretch reads AGMLNKSTQPDRPTMETVSEEHEPSHFYRGDRVHSSDSGLSKTQQSSEESVDKKG. Over residues 445-461 the composition is skewed to basic and acidic residues; the sequence is SEEHEPSHFYRGDRVHS. A compositionally biased stretch (polar residues) spans 462–474; that stretch reads SDSGLSKTQQSSE.

This sequence belongs to the anion channel-forming bestrophin (TC 1.A.46) family. Calcium-sensitive chloride channel subfamily. Forms oligomers.

It localises to the cell membrane. Its function is as follows. Forms chloride channels. The chain is Bestrophin homolog 17 from Caenorhabditis elegans.